Consider the following 136-residue polypeptide: Invertebrate-type lysozyme (136 aa).

The signal sequence occupies residues 1-11 (METVSVEEGLD). The I-type lysozyme domain maps to 14–130 (PGMVSQKCLL…WELLQKIPGC (117 aa)). Disulfide bonds link Cys21–Cys98, Cys24–Cys130, Cys26–Cys33, Cys38–Cys47, Cys60–Cys80, Cys70–Cys76, and Cys94–Cys112. Residue Glu29 is the Proton donor of the active site. The active-site Nucleophile is Asp41. Substrate is bound at residue 53–59 (KQPYWID). Asn75 carries an N-linked (GlcNAc...) asparagine glycan. Substrate is bound by residues Tyr84, Tyr92, 105–107 (HNG), and Lys119.

Homodimer in its autoinhibited state. Active as monomer.

It localises to the secreted. It carries out the reaction Hydrolysis of (1-&gt;4)-beta-linkages between N-acetylmuramic acid and N-acetyl-D-glucosamine residues in a peptidoglycan and between N-acetyl-D-glucosamine residues in chitodextrins.. Chitinase activity is activated by high salt concentrations which cause the release of the monomer from the autoinhibited homodimer. Its function is as follows. Bacteriolytic activity against Gram-positive bacterium M.luteus and thereby probably protects against bacterial infection. Also has chitinase activity. May act as an ispopeptidase, cleaving isopeptide bonds between the side chains of Lys and Gln residues in proteins or in the cross-linking peptide of peptidoglycan in bacterial cell walls. This is Invertebrate-type lysozyme from Ruditapes philippinarum (Japanese carpet shell).